We begin with the raw amino-acid sequence, 217 residues long: Small ribosomal subunit protein eS6 (217 aa).

The protein belongs to the eukaryotic ribosomal protein eS6 family. Post-translationally, phosphorylated.

This is Small ribosomal subunit protein eS6 (RPS6) from Encephalitozoon cuniculi (strain GB-M1) (Microsporidian parasite).